The following is a 186-amino-acid chain: Ribosome-recycling factor (186 aa).

Belongs to the RRF family.

The protein localises to the cytoplasm. Its function is as follows. Responsible for the release of ribosomes from messenger RNA at the termination of protein biosynthesis. May increase the efficiency of translation by recycling ribosomes from one round of translation to another. The polypeptide is Ribosome-recycling factor (Wolinella succinogenes (strain ATCC 29543 / DSM 1740 / CCUG 13145 / JCM 31913 / LMG 7466 / NCTC 11488 / FDC 602W) (Vibrio succinogenes)).